Reading from the N-terminus, the 412-residue chain is Clamp protein VP6 (412 aa).

It belongs to the reoviridae clamp protein family. Interacts with capsid proteins VP3, VP5 and VP7.

Its subcellular location is the virion. Functionally, located at the interface of the incomplete T=13 outer capsid and the pseudo T=2 inner capsid, 120 VP6 subunits clamp and stabilizes the inner capsid shell. The sequence is that of Clamp protein VP6 (S8) from Aquareovirus C (isolate Golden shiner/USA/GSRV/1977) (AQRV-C).